Here is a 36-residue protein sequence, read N- to C-terminus: Toxin Bcg III 29.21 (36 aa).

An intrachain disulfide couples Cys-6 to Cys-31.

Its subcellular location is the secreted. It localises to the nematocyst. In Bunodosoma cangicum (Sea anemone), this protein is Toxin Bcg III 29.21.